We begin with the raw amino-acid sequence, 246 residues long: NAD-dependent protein deacylase (246 aa).

Residues 2 to 246 form the Deacetylase sirtuin-type domain; the sequence is PTAVSDAAAP…AGVCLPAMLA (245 aa). Residue 29–49 coordinates NAD(+); that stretch reads GAGVSAESGVPTFRDALTGLW. 2 residues coordinate substrate: tyrosine 74 and arginine 77. Residue 107-110 coordinates NAD(+); that stretch reads QNVD. Histidine 125 (proton acceptor) is an active-site residue. Cysteine 137, cysteine 140, cysteine 153, and cysteine 156 together coordinate Zn(2+). NAD(+) contacts are provided by residues 193 to 195, 219 to 221, and alanine 237; these read GTS and NPE.

The protein belongs to the sirtuin family. Class III subfamily. Zn(2+) serves as cofactor.

The protein localises to the cytoplasm. The catalysed reaction is N(6)-acetyl-L-lysyl-[protein] + NAD(+) + H2O = 2''-O-acetyl-ADP-D-ribose + nicotinamide + L-lysyl-[protein]. The enzyme catalyses N(6)-succinyl-L-lysyl-[protein] + NAD(+) + H2O = 2''-O-succinyl-ADP-D-ribose + nicotinamide + L-lysyl-[protein]. Its function is as follows. NAD-dependent lysine deacetylase and desuccinylase that specifically removes acetyl and succinyl groups on target proteins. Modulates the activities of several proteins which are inactive in their acylated form. The chain is NAD-dependent protein deacylase from Ralstonia nicotianae (strain ATCC BAA-1114 / GMI1000) (Ralstonia solanacearum).